A 91-amino-acid chain; its full sequence is DNA-directed RNA polymerase subunit omega (91 aa).

Belongs to the RNA polymerase subunit omega family. The RNAP catalytic core consists of 2 alpha, 1 beta, 1 beta' and 1 omega subunit. When a sigma factor is associated with the core the holoenzyme is formed, which can initiate transcription.

The catalysed reaction is RNA(n) + a ribonucleoside 5'-triphosphate = RNA(n+1) + diphosphate. In terms of biological role, promotes RNA polymerase assembly. Latches the N- and C-terminal regions of the beta' subunit thereby facilitating its interaction with the beta and alpha subunits. This chain is DNA-directed RNA polymerase subunit omega, found in Proteus mirabilis (strain HI4320).